Reading from the N-terminus, the 108-residue chain is Tetrahydromethanopterin S-methyltransferase subunit B (108 aa).

The chain crosses the membrane as a helical span at residues 79–99 (GMFFGFWVTMAILVLVTILAV).

The protein belongs to the MtrB family. In terms of assembly, the complex is composed of 8 subunits; MtrA, MtrB, MtrC, MtrD, MtrE, MtrF, MtrG and MtrH.

Its subcellular location is the cell membrane. The catalysed reaction is 5-methyl-5,6,7,8-tetrahydromethanopterin + coenzyme M + 2 Na(+)(in) = 5,6,7,8-tetrahydromethanopterin + methyl-coenzyme M + 2 Na(+)(out). It functions in the pathway one-carbon metabolism; methanogenesis from CO(2); methyl-coenzyme M from 5,10-methylene-5,6,7,8-tetrahydromethanopterin: step 2/2. Functionally, part of a complex that catalyzes the formation of methyl-coenzyme M and tetrahydromethanopterin from coenzyme M and methyl-tetrahydromethanopterin. This is an energy-conserving, sodium-ion translocating step. This is Tetrahydromethanopterin S-methyltransferase subunit B from Methanococcus maripaludis (strain C7 / ATCC BAA-1331).